Here is an 89-residue protein sequence, read N- to C-terminus: Myrmicitoxin(1)-Pm2a (89 aa).

The first 22 residues, 1 to 22 (MEIPKLLYIAVIAIGLSGSLTC), serve as a signal peptide directing secretion. The propeptide occupies 23-61 (ATPLANPWGDPEAEANPEAKATAEATAEAIAEALAEPEP). Asn-88 carries the asparagine amide modification.

It belongs to the formicidae venom clade 1 family. As to expression, expressed by the venom gland.

The protein resides in the secreted. Its function is as follows. Toxin that potently modulates mammalian voltage-gated sodium (Nav) channels, reducing the voltage threshold for activation and inhibiting channel inactivation. Shows activity on hNav1.6/SCN8A (EC(50)=176 nM), mNav1.7/SCN9A (EC(50)=102 nM) and hNav1.7 (EC(50)=154 nM). In vivo, causes spontaneous, gradual and long-lasting nocifensive behaviors by intraplantar injection in mice, as well as pronounced swelling of the injected paw. Does not have effect on insects (blowflies). The polypeptide is Myrmicitoxin(1)-Pm2a (Pogonomyrmex maricopa (Maricopa harvester ant)).